Reading from the N-terminus, the 191-residue chain is MSQNITLIKDKILSDNYFTLRNITYDLTRRNGKVIRHKREVYDRGNGATILLYNSTKKTVVLVRQFRVATWVNGNEDGMLIETCAGLLDNDEPEVCIRKEAIEETGYDVGEVRKIFELYMSPGGVTELIHFFIAEYRDSERASTGGGVEDEDIEVLELPFSRALEMARSGEIRDGKTVLLLNYLHMSHLMG.

Residues Tyr-17, 38-40 (KRE), Arg-67, and 85-87 (AGL) each bind GDP-alpha-D-mannose. Residues 43-180 (DRGNGATILL…EIRDGKTVLL (138 aa)) form the Nudix hydrolase domain. Ala-85, Glu-100, and Glu-104 together coordinate Mg(2+). The Nudix box signature appears at 86 to 106 (GLLDNDEPEVCIRKEAIEETG). GDP-alpha-D-mannose-binding positions include Glu-104, Glu-127, 150–151 (DE), and Lys-176. Glu-151 lines the Mg(2+) pocket.

This sequence belongs to the Nudix hydrolase family. NudK subfamily. In terms of assembly, homodimer. The cofactor is Mg(2+).

The enzyme catalyses GDP-alpha-D-mannose + H2O = alpha-D-mannose 1-phosphate + GMP + 2 H(+). Nucleoside diphosphate sugar hydrolase that hydrolyzes GDP-mannose as its preferred substrate, yielding GMP and mannose-1-phosphate. The polypeptide is GDP-mannose pyrophosphatase (nudK) (Salmonella arizonae (strain ATCC BAA-731 / CDC346-86 / RSK2980)).